A 185-amino-acid polypeptide reads, in one-letter code: MSSSNSPVKSTGSPFIQSLKPRDNLASMGSSTQLIIKDIGEIHSRLLDHRPVIQGETRYFIKEFEEKRGLREMRVLENLRNSISETNEHDLPKCTDVMQDQLASVLKKLETANHTIHRLQQRELETAKEIASRAGDQMMRAHWEPFMKEQEQRRRTVDEEHRKAVMRLKDQYVTMEKELSKQISF.

Residues 1 to 16 (MSSSNSPVKSTGSPFI) show a composition bias toward polar residues. Residues 1 to 24 (MSSSNSPVKSTGSPFIQSLKPRDN) are disordered. A coiled-coil region spans residues 98 to 182 (MQDQLASVLK…VTMEKELSKQ (85 aa)).

It belongs to the BLOC1S5 family. In terms of assembly, component of the biogenesis of lysosome-related organelles complex 1 (BLOC-1).

Its function is as follows. Component of the BLOC-1 complex, a complex that is required for normal biogenesis of lysosome-related organelles (LRO), such as platelet dense granules and melanosomes. Plays a role in intracellular vesicle trafficking. This Xenopus tropicalis (Western clawed frog) protein is Biogenesis of lysosome-related organelles complex 1 subunit 5 (bloc1s5).